A 488-amino-acid chain; its full sequence is Aerolysin (488 aa).

Residues Met-1–Ala-24 form the signal peptide. 2 cysteine pairs are disulfide-bonded: Cys-43/Cys-99 and Cys-183/Cys-188. The interval Trp-69–Tyr-85 is interaction with host N-linked glycan. Residues Tyr-256 to Trp-288 form a part of the transmembrane beta-barrel after proteolytic activation of the toxin and insertion into the host membrane region. Residues Arg-346–His-355 are interaction with glycans from host GPI-anchor. The propeptide occupies Thr-444–Gln-488.

It belongs to the aerolysin family. Homodimer in solution; homoheptamer in the host membrane. After binding to GPI-anchored proteins in target membranes and proteolytic removal of the C-terminal propeptide, the protein assembles into a heptameric pre-pore complex. A further conformation change leads to insertion into the host membrane. In terms of processing, proteolytic cleavage and subsequent release of the propeptide trigger a major conformation change, leading to the formation of a heptameric pre-pore that then inserts into the host membrane.

It localises to the secreted. The protein localises to the host cell membrane. In terms of biological role, secreted, cytolytic toxin that forms pores in host membranes after proteolytic removal of a C-terminal propeptide, leading to destruction of the membrane permeability barrier and cell death. The pores are formed by transmembrane beta-strands and are approximately 3 nm in diameter. The protein is Aerolysin (asa1) of Aeromonas sobria.